Consider the following 67-residue polypeptide: ATP synthase F(0) complex subunit 8 (67 aa).

The helical transmembrane segment at Thr-8–Leu-24 threads the bilayer. Lys-54 bears the N6-acetyllysine; alternate mark. At Lys-54 the chain carries N6-succinyllysine; alternate. Lys-57 bears the N6-acetyllysine mark.

This sequence belongs to the ATPase protein 8 family. In terms of assembly, component of the ATP synthase complex composed at least of ATP5F1A/subunit alpha, ATP5F1B/subunit beta, ATP5MC1/subunit c (homooctomer), MT-ATP6/subunit a, MT-ATP8/subunit 8, ATP5ME/subunit e, ATP5MF/subunit f, ATP5MG/subunit g, ATP5MK/subunit k, ATP5MJ/subunit j, ATP5F1C/subunit gamma, ATP5F1D/subunit delta, ATP5F1E/subunit epsilon, ATP5PF/subunit F6, ATP5PB/subunit b, ATP5PD/subunit d, ATP5PO/subunit OSCP. ATP synthase complex consists of a soluble F(1) head domain (subunits alpha(3) and beta(3)) - the catalytic core - and a membrane F(0) domain - the membrane proton channel (subunits c, a, 8, e, f, g, k and j). These two domains are linked by a central stalk (subunits gamma, delta, and epsilon) rotating inside the F1 region and a stationary peripheral stalk (subunits F6, b, d, and OSCP). Interacts with PRICKLE3.

It is found in the mitochondrion membrane. Functionally, subunit 8, of the mitochondrial membrane ATP synthase complex (F(1)F(0) ATP synthase or Complex V) that produces ATP from ADP in the presence of a proton gradient across the membrane which is generated by electron transport complexes of the respiratory chain. ATP synthase complex consist of a soluble F(1) head domain - the catalytic core - and a membrane F(1) domain - the membrane proton channel. These two domains are linked by a central stalk rotating inside the F(1) region and a stationary peripheral stalk. During catalysis, ATP synthesis in the catalytic domain of F(1) is coupled via a rotary mechanism of the central stalk subunits to proton translocation. In vivo, can only synthesize ATP although its ATP hydrolase activity can be activated artificially in vitro. Part of the complex F(0) domain. The polypeptide is ATP synthase F(0) complex subunit 8 (Cavia porcellus (Guinea pig)).